We begin with the raw amino-acid sequence, 162 residues long: Putative 4-hydroxy-4-methyl-2-oxoglutarate aldolase (162 aa).

Substrate is bound by residues 75 to 78 (GDML) and R97. Residue D98 participates in a divalent metal cation binding.

The protein belongs to the class II aldolase/RraA-like family. In terms of assembly, homotrimer. It depends on a divalent metal cation as a cofactor.

It catalyses the reaction 4-hydroxy-4-methyl-2-oxoglutarate = 2 pyruvate. The enzyme catalyses oxaloacetate + H(+) = pyruvate + CO2. Catalyzes the aldol cleavage of 4-hydroxy-4-methyl-2-oxoglutarate (HMG) into 2 molecules of pyruvate. Also contains a secondary oxaloacetate (OAA) decarboxylase activity due to the common pyruvate enolate transition state formed following C-C bond cleavage in the retro-aldol and decarboxylation reactions. The chain is Putative 4-hydroxy-4-methyl-2-oxoglutarate aldolase from Stutzerimonas stutzeri (strain A1501) (Pseudomonas stutzeri).